A 485-amino-acid chain; its full sequence is GlcNAc-binding protein A (485 aa).

The first 29 residues, Met-1–Ala-29, serve as a signal peptide directing secretion. Residues Val-30 to Phe-200 enclose the Chitin-binding type-4 domain. The Chitin-binding type-3 domain occupies Ala-437–Trp-478.

Belongs to the GbpA family.

It is found in the secreted. Its function is as follows. Probably interacts with GlcNAc residues. May promote attachment to both epithelial cell surfaces and chitin. This chain is GlcNAc-binding protein A, found in Vibrio vulnificus (strain YJ016).